A 122-amino-acid polypeptide reads, in one-letter code: Large ribosomal subunit protein uL14 (122 aa).

It belongs to the universal ribosomal protein uL14 family. In terms of assembly, part of the 50S ribosomal subunit. Forms a cluster with proteins L3 and L19. In the 70S ribosome, L14 and L19 interact and together make contacts with the 16S rRNA in bridges B5 and B8.

Binds to 23S rRNA. Forms part of two intersubunit bridges in the 70S ribosome. The sequence is that of Large ribosomal subunit protein uL14 from Macrococcus caseolyticus (strain JCSC5402) (Macrococcoides caseolyticum).